The primary structure comprises 613 residues: Laccase 1 (613 aa).

Positions 1–20 are cleaved as a signal peptide; sequence MSSSVRLLLIVALLYTNSWA. Plastocyanin-like domains lie at 29-142, 171-359, and 468-598; these read ITWE…IRPK, YLVV…MRVP, and DATC…ILDG. The N-linked (GlcNAc...) asparagine glycan is linked to asparagine 74. Residues histidine 78, histidine 80, histidine 122, and histidine 124 each contribute to the Cu cation site. N-linked (GlcNAc...) asparagine glycans are attached at residues asparagine 256, asparagine 279, and asparagine 484. 3 residues coordinate Cu cation: histidine 506, histidine 509, and histidine 511. A glycan (N-linked (GlcNAc...) asparagine) is linked at asparagine 526. 4 residues coordinate Cu cation: histidine 580, cysteine 581, histidine 582, and histidine 586.

This sequence belongs to the multicopper oxidase family. Cu cation is required as a cofactor.

It is found in the cell surface. Its pathway is pigment biosynthesis. Its function is as follows. Laccase; part of the Pks1 gene cluster that mediates the biosynthesis of an anthraquinone derivative pigment that contributes to conidial pigmentation that provides protection from UV radiation, heat and cold stress. The polyketide synthase Pks1 produces 1-acetyl-2,4,6,8-tetrahydroxy-9,10-anthraquinone though condensation of acetyl-CoA with malonyl-CoA. The dehydratase EthD and the laccase Mlac1 further convert the anthraquinone derivative into the final conidial pigment. The sequence is that of Laccase 1 from Metarhizium acridum (strain CQMa 102).